The sequence spans 175 residues: Inorganic pyrophosphatase (175 aa).

Lysine 30, arginine 44, and tyrosine 56 together coordinate substrate. Aspartate 66, aspartate 71, and aspartate 103 together coordinate Mg(2+). Tyrosine 142 contributes to the substrate binding site.

This sequence belongs to the PPase family. Homohexamer. Mg(2+) serves as cofactor.

The protein resides in the cytoplasm. It catalyses the reaction diphosphate + H2O = 2 phosphate + H(+). Functionally, catalyzes the hydrolysis of inorganic pyrophosphate (PPi) forming two phosphate ions. In Pseudomonas aeruginosa (strain ATCC 15692 / DSM 22644 / CIP 104116 / JCM 14847 / LMG 12228 / 1C / PRS 101 / PAO1), this protein is Inorganic pyrophosphatase.